Reading from the N-terminus, the 478-residue chain is Putative malate transporter YflS (478 aa).

Transmembrane regions (helical) follow at residues 12–31 (AVKLVPLLITVAVGLIIWFI), 41–57 (AWHLFAIFVATIIGFIS), 64–81 (AIAIFALAVTALTGTLSI), 96–118 (IVIAFFISRGFIKTGLGARISYV), 187–209 (GFQGNLITSAMFLTAMAANPLIA), 222–244 (WTSWAIAAIVPGLVSLIITPLVI), 277–296 (LSMVIVFLLVLVLWIFGGSF), 300–319 (ATTTALIGLAVLLLSQVLTW), 332–354 (LTWFAALVMLANFLNELGMVSWF), 364–386 (GFSWIVAFIILIVVYYYSHYFFA), 398–420 (AFLAVVVAAGAPPLLAALSLAFI), and 450–472 (WSIGFILSIVHIIVWLVIGGLWW).

The protein belongs to the SLC13A/DASS transporter (TC 2.A.47) family. DIT1 subfamily.

Its subcellular location is the cell membrane. Functionally, might be a malate transporter. The sequence is that of Putative malate transporter YflS (yflS) from Bacillus subtilis (strain 168).